We begin with the raw amino-acid sequence, 186 residues long: Ribosome-recycling factor (186 aa).

Belongs to the RRF family.

Its subcellular location is the cytoplasm. In terms of biological role, responsible for the release of ribosomes from messenger RNA at the termination of protein biosynthesis. May increase the efficiency of translation by recycling ribosomes from one round of translation to another. This Paracidovorax citrulli (strain AAC00-1) (Acidovorax citrulli) protein is Ribosome-recycling factor.